The sequence spans 301 residues: Phosphatidylserine decarboxylase proenzyme (301 aa).

Active-site charge relay system; for autoendoproteolytic cleavage activity residues include Asp117, His173, and Ser260. The Schiff-base intermediate with substrate; via pyruvic acid; for decarboxylase activity role is filled by Ser260. Ser260 carries the pyruvic acid (Ser); by autocatalysis modification.

This sequence belongs to the phosphatidylserine decarboxylase family. PSD-B subfamily. Prokaryotic type II sub-subfamily. As to quaternary structure, heterodimer of a large membrane-associated beta subunit and a small pyruvoyl-containing alpha subunit. Requires pyruvate as cofactor. Is synthesized initially as an inactive proenzyme. Formation of the active enzyme involves a self-maturation process in which the active site pyruvoyl group is generated from an internal serine residue via an autocatalytic post-translational modification. Two non-identical subunits are generated from the proenzyme in this reaction, and the pyruvate is formed at the N-terminus of the alpha chain, which is derived from the carboxyl end of the proenzyme. The autoendoproteolytic cleavage occurs by a canonical serine protease mechanism, in which the side chain hydroxyl group of the serine supplies its oxygen atom to form the C-terminus of the beta chain, while the remainder of the serine residue undergoes an oxidative deamination to produce ammonia and the pyruvoyl prosthetic group on the alpha chain. During this reaction, the Ser that is part of the protease active site of the proenzyme becomes the pyruvoyl prosthetic group, which constitutes an essential element of the active site of the mature decarboxylase.

The protein resides in the cell membrane. It catalyses the reaction a 1,2-diacyl-sn-glycero-3-phospho-L-serine + H(+) = a 1,2-diacyl-sn-glycero-3-phosphoethanolamine + CO2. It participates in phospholipid metabolism; phosphatidylethanolamine biosynthesis; phosphatidylethanolamine from CDP-diacylglycerol: step 2/2. Functionally, catalyzes the formation of phosphatidylethanolamine (PtdEtn) from phosphatidylserine (PtdSer). The polypeptide is Phosphatidylserine decarboxylase proenzyme (Chlamydia trachomatis serovar L2b (strain UCH-1/proctitis)).